We begin with the raw amino-acid sequence, 270 residues long: Hemin import ATP-binding protein HmuV (270 aa).

Positions leucine 2–threonine 238 constitute an ABC transporter domain. ATP is bound at residue glycine 34 to threonine 41.

The protein belongs to the ABC transporter superfamily. Heme (hemin) importer (TC 3.A.1.14.5) family. As to quaternary structure, the complex is composed of two ATP-binding proteins (HmuV), two transmembrane proteins (HmuU) and a solute-binding protein (HmuT).

It localises to the cell inner membrane. In terms of biological role, part of the ABC transporter complex HmuTUV involved in hemin import. Responsible for energy coupling to the transport system. This chain is Hemin import ATP-binding protein HmuV, found in Jannaschia sp. (strain CCS1).